The sequence spans 155 residues: Transcriptional repressor NrdR (155 aa).

The segment at 3 to 34 (CPNCHQNASRVIDSRPTDEGRTIRRRRECENC) is a zinc-finger region. An ATP-cone domain is found at 49–139 (LLVIKNDGTR…IYRQFTDMSS (91 aa)).

This sequence belongs to the NrdR family. The cofactor is Zn(2+).

Its function is as follows. Negatively regulates transcription of bacterial ribonucleotide reductase nrd genes and operons by binding to NrdR-boxes. This chain is Transcriptional repressor NrdR, found in Lactobacillus delbrueckii subsp. bulgaricus (strain ATCC 11842 / DSM 20081 / BCRC 10696 / JCM 1002 / NBRC 13953 / NCIMB 11778 / NCTC 12712 / WDCM 00102 / Lb 14).